A 446-amino-acid polypeptide reads, in one-letter code: MADYLTVTHLTKYLKLKFDRDPYLERVYLTGQVSNFRKRPTHQYFSLKDESAVIQATMWAGVYKKLGFDLEEGMKINVIGRVQLYEPSGSYSIVIEKAEPDGIGALALQFEQLKKKLTAEGYFEQKHKQPLPQFVSKIGVITSPSGAVIRDIITTVSRRFPGVEILLFPTKVQGDGAAQEVVANIRRANQREDLDLLIVGRGGGSIEDLWAFNEEIVVQAIFESQLPVISSVGHETDTTLADFVADRRAATPTAAAELATPITKTDLMSWIVERQNRSYQACLRRIKQRQEWVDKLSQSVIFRQPERLYDAYLQKIDRLSMTLMNTMKDRLSSAKENKVQLDHALANSQLQTKIERYQDRVATAKRLLMANMARQYDSQLARFEKAQDALLSLDVSRIIARGYAMIEKNQALVASVSQITKGDQLTIKMRDGQLDVEVKDVKNENI.

It belongs to the XseA family. Heterooligomer composed of large and small subunits.

Its subcellular location is the cytoplasm. It carries out the reaction Exonucleolytic cleavage in either 5'- to 3'- or 3'- to 5'-direction to yield nucleoside 5'-phosphates.. Functionally, bidirectionally degrades single-stranded DNA into large acid-insoluble oligonucleotides, which are then degraded further into small acid-soluble oligonucleotides. The polypeptide is Exodeoxyribonuclease 7 large subunit (Streptococcus pyogenes serotype M6 (strain ATCC BAA-946 / MGAS10394)).